The primary structure comprises 357 residues: Methylthioribose-1-phosphate isomerase (357 aa).

Substrate-binding positions include 49-51, Arg89, and Gln197; that span reads RGA. Asp238 functions as the Proton donor in the catalytic mechanism. 248–249 contacts substrate; sequence NK.

It belongs to the eIF-2B alpha/beta/delta subunits family. MtnA subfamily.

The catalysed reaction is 5-(methylsulfanyl)-alpha-D-ribose 1-phosphate = 5-(methylsulfanyl)-D-ribulose 1-phosphate. Its pathway is amino-acid biosynthesis; L-methionine biosynthesis via salvage pathway; L-methionine from S-methyl-5-thio-alpha-D-ribose 1-phosphate: step 1/6. Functionally, catalyzes the interconversion of methylthioribose-1-phosphate (MTR-1-P) into methylthioribulose-1-phosphate (MTRu-1-P). The chain is Methylthioribose-1-phosphate isomerase from Leptospira biflexa serovar Patoc (strain Patoc 1 / Ames).